The following is a 600-amino-acid chain: ATP-dependent lipid A-core flippase (600 aa).

4 helical membrane passes run isoleucine 27–leucine 47, leucine 83–leucine 103, leucine 174–valine 194, and proline 267–leucine 287. Residues leucine 31–lysine 322 enclose the ABC transmembrane type-1 domain. The region spanning leucine 354–methionine 590 is the ABC transporter domain. ATP is bound at residue glycine 388–serine 395.

Belongs to the ABC transporter superfamily. Lipid exporter (TC 3.A.1.106) family. In terms of assembly, homodimer.

The protein localises to the cell inner membrane. The catalysed reaction is ATP + H2O + lipid A-core oligosaccharideSide 1 = ADP + phosphate + lipid A-core oligosaccharideSide 2.. Involved in lipopolysaccharide (LPS) biosynthesis. Translocates lipid A-core from the inner to the outer leaflet of the inner membrane. Transmembrane domains (TMD) form a pore in the inner membrane and the ATP-binding domain (NBD) is responsible for energy generation. The chain is ATP-dependent lipid A-core flippase from Pseudomonas fluorescens (strain Pf0-1).